The following is a 265-amino-acid chain: Triosephosphate isomerase (265 aa).

8–10 lines the substrate pocket; that stretch reads NWK. Catalysis depends on His-103, which acts as the Electrophile. Catalysis depends on Glu-182, which acts as the Proton acceptor. Substrate-binding positions include Gly-188, Ser-226, and 247-248; that span reads GG.

Belongs to the triosephosphate isomerase family. Homodimer.

The protein localises to the cytoplasm. It carries out the reaction D-glyceraldehyde 3-phosphate = dihydroxyacetone phosphate. It participates in carbohydrate biosynthesis; gluconeogenesis. The protein operates within carbohydrate degradation; glycolysis; D-glyceraldehyde 3-phosphate from glycerone phosphate: step 1/1. Involved in the gluconeogenesis. Catalyzes stereospecifically the conversion of dihydroxyacetone phosphate (DHAP) to D-glyceraldehyde-3-phosphate (G3P). This is Triosephosphate isomerase from Psychrobacter sp. (strain PRwf-1).